Consider the following 352-residue polypeptide: 4-hydroxy-2-oxovalerate aldolase 4 (352 aa).

The 253-residue stretch at 9–261 folds into the Pyruvate carboxyltransferase domain; the sequence is IRVTDSSLRD…RTGIDTLKII (253 aa). 17-18 is a binding site for substrate; that stretch reads RD. Asp18 is a Mn(2+) binding site. His21 functions as the Proton acceptor in the catalytic mechanism. Substrate contacts are provided by Ser171 and His200. His200 and His202 together coordinate Mn(2+). Tyr291 lines the substrate pocket.

This sequence belongs to the 4-hydroxy-2-oxovalerate aldolase family.

The enzyme catalyses (S)-4-hydroxy-2-oxopentanoate = acetaldehyde + pyruvate. The chain is 4-hydroxy-2-oxovalerate aldolase 4 from Rhodococcus jostii (strain RHA1).